The chain runs to 131 residues: Profilin-4 (131 aa).

A disulfide bond links C13 and C115. An Involved in PIP2 interaction motif is present at residues 81–97 (AVIRGKKGAGGITVKKT). T111 is subject to Phosphothreonine.

This sequence belongs to the profilin family. As to quaternary structure, occurs in many kinds of cells as a complex with monomeric actin in a 1:1 ratio. Post-translationally, phosphorylated by MAP kinases.

It localises to the cytoplasm. The protein resides in the cytoskeleton. Its function is as follows. Binds to actin and affects the structure of the cytoskeleton. At high concentrations, profilin prevents the polymerization of actin, whereas it enhances it at low concentrations. The polypeptide is Profilin-4 (Olea europaea (Common olive)).